The following is a 458-amino-acid chain: GTPase Obg (458 aa).

An Obg domain is found at 1–157 (MSFLDRVKIY…ITLYLELKVL (157 aa)). Positions 158–326 (ADLGLVGFPN…VLNEIVKVIS (169 aa)) constitute an OBG-type G domain. Residues 164-171 (GFPNAGKS), 189-193 (FTTLN), 210-213 (DIPG), 280-283 (NKAD), and 307-309 (SAA) contribute to the GTP site. Mg(2+) is bound by residues Ser-171 and Thr-191. In terms of domain architecture, OCT spans 341–419 (AVHGVEPLFK…VGQKEFEWSG (79 aa)). Positions 420-458 (TELDSERAEQPDFEGYKRRTTQAERLEKRRQRRLKKEEK) are disordered. Basic and acidic residues predominate over residues 423-446 (DSERAEQPDFEGYKRRTTQAERLE). The span at 447 to 458 (KRRQRRLKKEEK) shows a compositional bias: basic residues.

Belongs to the TRAFAC class OBG-HflX-like GTPase superfamily. OBG GTPase family. As to quaternary structure, monomer. Requires Mg(2+) as cofactor.

It localises to the cytoplasm. Its function is as follows. An essential GTPase which binds GTP, GDP and possibly (p)ppGpp with moderate affinity, with high nucleotide exchange rates and a fairly low GTP hydrolysis rate. Plays a role in control of the cell cycle, stress response, ribosome biogenesis and in those bacteria that undergo differentiation, in morphogenesis control. The polypeptide is GTPase Obg (Elusimicrobium minutum (strain Pei191)).